Here is a 627-residue protein sequence, read N- to C-terminus: (R)-linalool synthase, chloroplastic (627 aa).

A chloroplast-targeting transit peptide spans 1–21 (MAFVSIAPLASRCCVHKSFVS). The Mg(2+) site is built by D378, D382, and E530. The DDXXD motif motif lies at 378–382 (DDIYD).

This sequence belongs to the terpene synthase family. Tpsd subfamily. It depends on Mg(2+) as a cofactor. Mn(2+) is required as a cofactor.

It localises to the plastid. The protein resides in the chloroplast. It carries out the reaction (2E)-geranyl diphosphate + H2O = (R)-linalool + diphosphate. It functions in the pathway terpene metabolism; oleoresin biosynthesis. Functionally, terpene synthase (TPS) involved in the biosynthesis of monoterpene natural products included in conifer oleoresin secretions and volatile emissions; these compounds contribute to biotic and abiotic stress defense against herbivores and pathogens. Catalyzes the conversion of (2E)-geranyl diphosphate (GPP) to (R)-linalool. The protein is (R)-linalool synthase, chloroplastic of Picea glauca (White spruce).